We begin with the raw amino-acid sequence, 695 residues long: Follicle-stimulating hormone receptor (695 aa).

An N-terminal signal peptide occupies residues 1–17 (MTFLLVSLLAFLSLGSG). 2 disulfides stabilise this stretch: Cys18-Cys25 and Cys23-Cys32. Positions 18–46 (CHHRICHCWHRVFLCQESKVTEIPSDLPR) constitute an LRRNT domain. Over 18-366 (CHHRICHCWH…EDIMGYDILR (349 aa)) the chain is Extracellular. LRR repeat units follow at residues 49-72 (VELRFVLTKLRVIPKGAFSGFGDL), 73-97 (EKIEISQNDVLEVIEANVFFNLSKL), 98-118 (HEIRIEKANNLLYIDTDAFQN), 119-143 (LPNLRYLLISNTGIKHFPAVHKIQS), 144-169 (LQKVLLDIQDNINIHTVERNSFMGLS), 170-192 (FESMILWLNKNGIQEIHNCAFNG), 193-216 (TQLDELNLSDNINLEELPNDVFQG), 217-240 (ASGPVILDISRTRIHSLPSYGLEN), and 241-259 (IKKLRAKSTYNLKKLPSLD). N-linked (GlcNAc...) asparagine glycosylation is present at Asn93. Residues Asn191 and Asn199 are each glycosylated (N-linked (GlcNAc...) asparagine). 4 cysteine pairs are disulfide-bonded: Cys275–Cys346, Cys276–Cys292, Cys276–Cys356, and Cys292–Cys338. An N-linked (GlcNAc...) asparagine glycan is attached at Asn293. At Tyr335 the chain carries Sulfotyrosine. The chain crosses the membrane as a helical span at residues 367-387 (VLIWFISILAITGNIIVLMIL). At 388-398 (ITSQYKLTVPR) the chain is on the cytoplasmic side. The helical transmembrane segment at 399–419 (FLMCNLAFADLCIGIYLLLIA) threads the bilayer. At 420-444 (SVDIYTKSQYHNYAIDWQTGAGCDA) the chain is on the extracellular side. A helical membrane pass occupies residues 445–465 (AGFFTVFASELSVYTLTVITL). Topologically, residues 466–487 (ERWHTITHAMQLECKVQLRHAA) are cytoplasmic. A helical transmembrane segment spans residues 488 to 508 (IIMLLGWIFAFMVALFPIFGI). The Extracellular segment spans residues 509–528 (SSYMKVSICLPMDIDSPLSQ). A helical membrane pass occupies residues 529 to 550 (LYVMSLLVLNVLAFVVICCCYA). Over 551 to 573 (HIYLTVRNPNIVSSSSDTKIAKR) the chain is Cytoplasmic. A helical membrane pass occupies residues 574–594 (MAMLIFTDFLCMAPISFFAIS). Topologically, residues 595–608 (ASLKVPLITVSKSK) are extracellular. The chain crosses the membrane as a helical span at residues 609 to 629 (ILLVLFYPINSCANPFLYAIF). The Cytoplasmic segment spans residues 630-695 (TKNFRRDFFI…LIPLRHLAKN (66 aa)).

Belongs to the G-protein coupled receptor 1 family. FSH/LSH/TSH subfamily. In terms of assembly, homotrimer. Functions as a homotrimer binding the FSH hormone heterodimer composed of CGA and FSHB. Interacts with ARRB2. Interacts with APPL2; interaction is independent of follicle stimulating hormone stimulation. Post-translationally, N-glycosylated; indirectly required for FSH-binding, possibly via a conformational change that allows high affinity binding of hormone. Sulfated.

The protein resides in the cell membrane. In terms of biological role, g protein-coupled receptor for follitropin, the follicle-stimulating hormone. Through cAMP production activates the downstream PI3K-AKT and ERK1/ERK2 signaling pathways. The polypeptide is Follicle-stimulating hormone receptor (FSHR) (Felis catus (Cat)).